The sequence spans 249 residues: 2,3-bisphosphoglycerate-dependent phosphoglycerate mutase (249 aa).

Residues 9-16, 22-23, arginine 61, 88-91, lysine 99, 115-116, and 184-185 each bind substrate; these read RHGQSQWN, TG, ERHY, RR, and GN. The Tele-phosphohistidine intermediate role is filled by histidine 10. Glutamate 88 serves as the catalytic Proton donor/acceptor.

It belongs to the phosphoglycerate mutase family. BPG-dependent PGAM subfamily. Homodimer.

It carries out the reaction (2R)-2-phosphoglycerate = (2R)-3-phosphoglycerate. It participates in carbohydrate degradation; glycolysis; pyruvate from D-glyceraldehyde 3-phosphate: step 3/5. Catalyzes the interconversion of 2-phosphoglycerate and 3-phosphoglycerate. This is 2,3-bisphosphoglycerate-dependent phosphoglycerate mutase from Xylella fastidiosa (strain M23).